Here is a 463-residue protein sequence, read N- to C-terminus: L-seryl-tRNA(Sec) selenium transferase (463 aa).

At Lys-295 the chain carries N6-(pyridoxal phosphate)lysine.

It belongs to the SelA family. As to quaternary structure, homodecamer; pentamer of dimers. Binds only one seryl-tRNA(Sec) per dimer. Requires pyridoxal 5'-phosphate as cofactor.

Its subcellular location is the cytoplasm. The catalysed reaction is L-seryl-tRNA(Sec) + selenophosphate + H(+) = L-selenocysteinyl-tRNA(Sec) + phosphate. It participates in aminoacyl-tRNA biosynthesis; selenocysteinyl-tRNA(Sec) biosynthesis; selenocysteinyl-tRNA(Sec) from L-seryl-tRNA(Sec) (bacterial route): step 1/1. Functionally, converts seryl-tRNA(Sec) to selenocysteinyl-tRNA(Sec) required for selenoprotein biosynthesis. This chain is L-seryl-tRNA(Sec) selenium transferase, found in Escherichia coli O81 (strain ED1a).